The following is a 228-amino-acid chain: Protein JAZ7 (228 aa).

A Tify domain is found at 101–136; that stretch reads LSPNESTLTIFYMGEVHIFPGISPEKAELIIDLVSK. The short motif at 176–199 is the Jas element; it reads MARRATLARFLEKRKHRLIKARPY. A Nuclear localization signal motif is present at residues 177-184; sequence ARRATLAR.

The protein belongs to the TIFY/JAZ family. As to quaternary structure, interacts with MYC2 (via N-terminus). JAZ7 competes with MED25 for binding to MYC2. Interacts with MTB1 (via N-terminus).

The protein localises to the nucleus. Functionally, repressor of jasmonate responses. The chain is Protein JAZ7 from Solanum lycopersicum (Tomato).